The primary structure comprises 658 residues: Interferon-induced GTP-binding protein Mx1 (658 aa).

The residue at position 1 (methionine 1) is an N-acetylmethionine. The tract at residues 1-20 (MVNSKGKITDSDPGSSHLLL) is disordered. A Dynamin-type G domain is found at 65-338 (DLALPAIAVI…LITHICKTLP (274 aa)). The tract at residues 75–82 (GDQSSGKS) is G1 motif. Residue 75 to 82 (GDQSSGKS) participates in GTP binding. The interval 100–102 (VTR) is G2 motif. A G3 motif region spans residues 176–179 (DLPG). Residues 176 to 180 (DLPGI) and 245 to 248 (TKPD) each bind GTP. Positions 245–248 (TKPD) are G4 motif. Residues 277 to 280 (KCRG) are G5 motif. The bundle signaling element (BSE) stretch occupies residues 339 to 364 (LLEKQIKENYEKITEELQKYGSDVPE). Positions 364–531 (EEEHEKMFFL…HFQMEQIVYC (168 aa)) are middle domain. Residues 365–628 (EEHEKMFFLI…KDTHNWLLKE (264 aa)) are stalk. Positions 551–554 (KDKK) are critical for lipid-binding. The 89-residue stretch at 570-658 (LSDIFEHLLA…ARRRLAKFPG (89 aa)) folds into the GED domain.

This sequence belongs to the TRAFAC class dynamin-like GTPase superfamily. Dynamin/Fzo/YdjA family. In terms of assembly, homooligomer. Oligomerizes into multimeric filamentous or ring-like structures by virtue of its stalk domain. Oligomerization is critical for GTPase activity, protein stability, and recognition of viral target structures. Interacts with TRPC1, TRPC3, TRPC4, TRPC5, TRPC6 and TRPC7. Interacts with HSPA5. Interacts with TUBB/TUBB5. Interacts with DDX39A and DDX39B. In terms of processing, ISGylated.

The protein localises to the cytoplasm. Its subcellular location is the endoplasmic reticulum membrane. The protein resides in the perinuclear region. In terms of biological role, interferon-induced dynamin-like GTPase with antiviral activity. In Otaria byronia (South American sea lion), this protein is Interferon-induced GTP-binding protein Mx1 (MX1).